The chain runs to 78 residues: Exodeoxyribonuclease 7 small subunit (78 aa).

This sequence belongs to the XseB family. As to quaternary structure, heterooligomer composed of large and small subunits.

The protein localises to the cytoplasm. It carries out the reaction Exonucleolytic cleavage in either 5'- to 3'- or 3'- to 5'-direction to yield nucleoside 5'-phosphates.. In terms of biological role, bidirectionally degrades single-stranded DNA into large acid-insoluble oligonucleotides, which are then degraded further into small acid-soluble oligonucleotides. The polypeptide is Exodeoxyribonuclease 7 small subunit (Synechococcus sp. (strain JA-2-3B'a(2-13)) (Cyanobacteria bacterium Yellowstone B-Prime)).